A 218-amino-acid chain; its full sequence is Oxygen regulatory protein NreC (218 aa).

The region spanning 2–119 (KIVIADDHAV…QLILAVRTVY (118 aa)) is the Response regulatory domain. Position 53 is a 4-aspartylphosphate (aspartate 53). The HTH luxR-type domain maps to 149–214 (SSDPFKILSK…ELVEYALKKK (66 aa)). Residues 173-192 (NKDIAEKLFVSVKTVEAHKT) constitute a DNA-binding region (H-T-H motif).

Post-translationally, phosphorylated by NreB.

The protein resides in the cytoplasm. Functionally, member of the two-component regulatory system NreB/NreC involved in the control of dissimilatory nitrate/nitrite reduction in response to oxygen. Phosphorylated NreC binds to a GC-rich palindromic sequence at the promoters of the nitrate (narGHJI) and nitrite (nir) reductase operons, as well as the putative nitrate transporter gene narT, and activates their expression. This Staphylococcus epidermidis (strain ATCC 12228 / FDA PCI 1200) protein is Oxygen regulatory protein NreC (nreC).